Consider the following 111-residue polypeptide: Nucleoid-associated protein Tmel_0542 (111 aa).

This sequence belongs to the YbaB/EbfC family. In terms of assembly, homodimer.

The protein localises to the cytoplasm. Its subcellular location is the nucleoid. Functionally, binds to DNA and alters its conformation. May be involved in regulation of gene expression, nucleoid organization and DNA protection. The protein is Nucleoid-associated protein Tmel_0542 of Thermosipho melanesiensis (strain DSM 12029 / CIP 104789 / BI429).